A 513-amino-acid chain; its full sequence is Cytochrome P450 monooxygenase orf3 (513 aa).

The chain crosses the membrane as a helical span at residues 11–31 (LVALGLIAATIIIYSFTLTVY). N-linked (GlcNAc...) asparagine glycans are attached at residues Asn-211 and Asn-351. Cys-455 contacts heme.

The protein belongs to the cytochrome P450 family. It depends on heme as a cofactor.

The protein resides in the membrane. The protein operates within mycotoxin biosynthesis. Cytochrome P450 monooxygenase; part of the gene cluster that mediates the biosynthesis of brefeldin A (BFA), a protein transport inhibitor that shows antiviral, antifungal, and antitumor properties. The proposed biosynthesis of BFA involves formation of an acyclic polyketide chain that is differentially tailored throughout the backbone. The highly reducing polyketide synthase Bref-PKS is proposed to synthesize the precisely reduced octaketide precursor, which could then be directly offloaded by the thiohydrolase enzyme Bref-TH followed by a cytochrome P450 monooxygenase-mediated formation of the cyclopentane ring and macrocyclization to afford 7-deoxy BFA. Alternatively, the first ring annulation can also occur on the ACP-tethered intermediate before the thiohydrolase release and lactonization. The C7-hydroxylation by another cytochrome P450 monooxygenase is believed to be the final step in the process to obtain the final structure of BFA. In addition to the HRPKS Bref-PKS and the thiohydrolase Bref-TH, the brefeldin A biosynthesis cluster contains 4 cytochrome p450 monooxygenases (called orf3 to orf6), as well a the probable cluster-specific transcription regulator orf8. This chain is Cytochrome P450 monooxygenase orf3, found in Eupenicillium brefeldianum (Penicillium brefeldianum).